The sequence spans 252 residues: 5-oxoprolinase subunit A (252 aa).

This sequence belongs to the LamB/PxpA family. In terms of assembly, forms a complex composed of PxpA, PxpB and PxpC.

It carries out the reaction 5-oxo-L-proline + ATP + 2 H2O = L-glutamate + ADP + phosphate + H(+). In terms of biological role, catalyzes the cleavage of 5-oxoproline to form L-glutamate coupled to the hydrolysis of ATP to ADP and inorganic phosphate. This Kocuria rhizophila (strain ATCC 9341 / DSM 348 / NBRC 103217 / DC2201) protein is 5-oxoprolinase subunit A.